We begin with the raw amino-acid sequence, 525 residues long: NAD(P)H-quinone oxidoreductase chain 4-2 (525 aa).

14 helical membrane passes run 6–26 (FPWLTTIILLPIAASLLIPII), 36–56 (WYALTVGLIDFALIVYAFYTS), 91–111 (LIILTGFITTLATLAAWPVTL), 115–135 (LFYFLLLAMYGGQIAVFAVQD), 137–157 (LLFFLVWELELIPVYLLLAIW), 169–189 (FILYTAGGSLFILLASLTMAF), 212–232 (LLLYAGFLIAYAIKLPIIPLH), 243–263 (TAPAHMLLAGILLKMGGYALI), 277–297 (FAPVLVVLGVVNIIYAALTSF), 314–334 (MGFVIIGFASFTDLGLSGAVL), 335–355 (QMVSHGLIGASLFFLVGATYD), 375–397 (IFAMFTACSMASLALPGMSGFVA), 417–437 (VIVVFLMAVGVILTPIYLLSM), and 464–484 (VFVIACLLVPIIGIGFYPKLL).

The protein belongs to the complex I subunit 4 family.

The protein resides in the cellular thylakoid membrane. It catalyses the reaction a plastoquinone + NADH + (n+1) H(+)(in) = a plastoquinol + NAD(+) + n H(+)(out). The enzyme catalyses a plastoquinone + NADPH + (n+1) H(+)(in) = a plastoquinol + NADP(+) + n H(+)(out). Its function is as follows. NDH-1 shuttles electrons from NAD(P)H, via FMN and iron-sulfur (Fe-S) centers, to quinones in the respiratory chain. The immediate electron acceptor for the enzyme in this species is believed to be plastoquinone. Couples the redox reaction to proton translocation (for every two electrons transferred, four hydrogen ions are translocated across the cytoplasmic membrane), and thus conserves the redox energy in a proton gradient. This Nostoc sp. (strain PCC 7120 / SAG 25.82 / UTEX 2576) protein is NAD(P)H-quinone oxidoreductase chain 4-2 (ndhD2).